A 309-amino-acid chain; its full sequence is Ankyrin repeat protein VACWR203 (309 aa).

ANK repeat units follow at residues 13–44, 110–142, 160–189, 197–231, and 269–298; these read SVFK…SLTI, KYGT…DINA, FVYH…DLTI, PVVY…RASH, and EGRT…DIVV.

It belongs to the orthopoxviruses VACWR203 protein family.

This is Ankyrin repeat protein VACWR203 from Bos taurus (Bovine).